The primary structure comprises 313 residues: Cytochrome c biogenesis protein CcsA (313 aa).

8 helical membrane-spanning segments follow: residues 9 to 29 (ILTH…LITF), 44 to 64 (GIIV…ISSG), 71 to 91 (LYES…IPYF), 111 to 131 (GFAT…VPAL), 143 to 163 (MILG…LLVI), 217 to 237 (VISL…VWAN), 244 to 264 (WNWD…AIYL), and 278 to 298 (AIVA…VNLL).

Belongs to the CcmF/CycK/Ccl1/NrfE/CcsA family. In terms of assembly, may interact with Ccs1.

It is found in the plastid. Its subcellular location is the chloroplast thylakoid membrane. Its function is as follows. Required during biogenesis of c-type cytochromes (cytochrome c6 and cytochrome f) at the step of heme attachment. The chain is Cytochrome c biogenesis protein CcsA from Solanum bulbocastanum (Wild potato).